The primary structure comprises 117 residues: MKTIPSEVRCSRLCPACTNAALRLPRNAGRALIWIYRHTLSPLVGFNCRHLPTCSAYGDEAIARFGLWGGGWMTLARILRCRPWGTSGIDNVPVAKPSGATWYRPWRYGRWRGVNAK.

This sequence belongs to the UPF0161 family.

It localises to the cell inner membrane. Functionally, could be involved in insertion of integral membrane proteins into the membrane. The chain is Putative membrane protein insertion efficiency factor from Nitrobacter winogradskyi (strain ATCC 25391 / DSM 10237 / CIP 104748 / NCIMB 11846 / Nb-255).